We begin with the raw amino-acid sequence, 580 residues long: tRNA-guanine(15) transglycosylase (580 aa).

The Nucleophile role is filled by Asp-91. Substrate is bound by residues Asp-126 and Ala-192. The Zn(2+) site is built by Cys-275, Cys-277, and Cys-280. The 76-residue stretch at 504-579 (RMRVVVDEDA…LAVKVRRGVE (76 aa)) folds into the PUA domain.

This sequence belongs to the archaeosine tRNA-ribosyltransferase family. The cofactor is Zn(2+).

It carries out the reaction guanosine(15) in tRNA + 7-cyano-7-deazaguanine = 7-cyano-7-carbaguanosine(15) in tRNA + guanine. It functions in the pathway tRNA modification; archaeosine-tRNA biosynthesis. In terms of biological role, exchanges the guanine residue with 7-cyano-7-deazaguanine (preQ0) at position 15 in the dihydrouridine loop (D-loop) of archaeal tRNAs. This Thermococcus kodakarensis (strain ATCC BAA-918 / JCM 12380 / KOD1) (Pyrococcus kodakaraensis (strain KOD1)) protein is tRNA-guanine(15) transglycosylase.